A 68-amino-acid polypeptide reads, in one-letter code: Large ribosomal subunit protein bL32 (68 aa).

Residues 1-20 are disordered; sequence MAVQQNKVSKSRRNNRRAHD.

Belongs to the bacterial ribosomal protein bL32 family.

This is Large ribosomal subunit protein bL32 from Ruegeria sp. (strain TM1040) (Silicibacter sp.).